A 564-amino-acid polypeptide reads, in one-letter code: Histone acetyltransferase rtt109 (564 aa).

Residues Phe138, 157–159 (HVL), and Trp167 each bind acetyl-CoA. Asp261 functions as the Proton donor/acceptor in the catalytic mechanism. An N6-acetyllysine; by autocatalysis modification is found at Lys263. Disordered regions lie at residues 355–420 (YDKV…NAFY) and 506–549 (RKKD…ESPG). Low complexity predominate over residues 366–377 (AVSVSTDSQSSD). 2 stretches are compositionally biased toward polar residues: residues 394–417 (DPST…TDQN) and 512–521 (SQATTATSAQ). Residues 529-544 (GTVSTAVTAEASTTGT) are compositionally biased toward low complexity.

It belongs to the RTT109 family.

It is found in the nucleus. The protein localises to the vacuole. The catalysed reaction is L-lysyl-[protein] + acetyl-CoA = N(6)-acetyl-L-lysyl-[protein] + CoA + H(+). The enzyme catalyses L-lysyl-[histone] + acetyl-CoA = N(6)-acetyl-L-lysyl-[histone] + CoA + H(+). In terms of biological role, histone chaperone-dependent acetylase that modifies 'Lys-56' of histone H3 (H3K56ac). Histone H3 'Lys-56' acetylation may be required for S-phase-linked DNA damage tolerance. Also acetylates 'Lys-9' of histone H3 (H3K9ac). Autoacetylates. This chain is Histone acetyltransferase rtt109, found in Aspergillus flavus.